Consider the following 560-residue polypeptide: MFS-type transporter pgmG (560 aa).

The disordered stretch occupies residues 1–32 (MSETVTQTETDQRPATARSLGAEEKEAKSDEQ). Residues 21 to 31 (GAEEKEAKSDE) show a composition bias toward basic and acidic residues. 8 helical membrane-spanning segments follow: residues 45 to 65 (FIVIISILSSVTLYSLDNTIV), 84 to 104 (WLSVAFLVACVATNSIWSKIY), 111 to 131 (WLYLFCVVLFEVGSAMCGAAP), 141 to 161 (ALAGLGGAGLYVGVMTLLSVN), 174 to 194 (TGLTWGVGTVLGPIVGGGFAV), 201 to 221 (WSFYINLFFAAVAIPIYLFML), 242 to 262 (LGTILMIGACVSGVMAINFGG), and 275 to 295 (CFVVSGVLFIVFGLQQWYCIG). N300 carries N-linked (GlcNAc...) asparagine glycosylation. The chain crosses the membrane as a helical span at residues 313–333 (FIILFVQTASVATVFFVPIYF). An N-linked (GlcNAc...) asparagine glycan is attached at N343. Helical transmembrane passes span 346–366 (AIDAGVRLLPLVCFIVAAMIL), 378–398 (MPWYLVGGCLSLVGSVLMYTI), 409–429 (GYMIILGVGGGMYAQASFAVA), 440–460 (VATGFISLAQLTGGTIALAIA), and 515–535 (ISQVYILPITGAAMSISLAIF).

Belongs to the major facilitator superfamily. TCR/Tet family.

It localises to the membrane. MFS-type transporter; part of the gene cluster that mediates the biosynthesis of pleosporalin A, ascomycone A, as well as a third cryptic naphthoquinone derived pigment, all responsible for the coloration of conidia. Seems not to be involved in pigment biosynthesis although its expression is regulated by the cluster-specific transcription factor pgmR. The sequence is that of MFS-type transporter pgmG from Aspergillus terreus.